Consider the following 444-residue polypeptide: Phosphoglucosamine mutase (444 aa).

The active-site Phosphoserine intermediate is Ser-101. Mg(2+)-binding residues include Ser-101, Asp-240, Asp-242, and Asp-244. Position 101 is a phosphoserine (Ser-101).

It belongs to the phosphohexose mutase family. It depends on Mg(2+) as a cofactor. Post-translationally, activated by phosphorylation.

The catalysed reaction is alpha-D-glucosamine 1-phosphate = D-glucosamine 6-phosphate. Functionally, catalyzes the conversion of glucosamine-6-phosphate to glucosamine-1-phosphate. This chain is Phosphoglucosamine mutase, found in Sphingopyxis alaskensis (strain DSM 13593 / LMG 18877 / RB2256) (Sphingomonas alaskensis).